Here is a 232-residue protein sequence, read N- to C-terminus: Ureidoacrylate amidohydrolase RutB (232 aa).

The active-site Proton acceptor is the Asp26. The active site involves Lys135. The active-site Nucleophile is Cys168.

This sequence belongs to the isochorismatase family. RutB subfamily.

The enzyme catalyses (Z)-3-ureidoacrylate + H2O + H(+) = (Z)-3-aminoacrylate + NH4(+) + CO2. It carries out the reaction (Z)-3-ureidoacrylate + H2O = (Z)-3-aminoacrylate + carbamate + H(+). It catalyses the reaction (Z)-2-methylureidoacrylate + H2O + H(+) = (Z)-2-methylaminoacrylate + NH4(+) + CO2. Its function is as follows. Hydrolyzes ureidoacrylate to form aminoacrylate and carbamate. The carbamate hydrolyzes spontaneously, thereby releasing one of the nitrogen atoms of the pyrimidine ring as ammonia and one of its carbon atoms as CO2. The chain is Ureidoacrylate amidohydrolase RutB from Cronobacter turicensis (strain DSM 18703 / CCUG 55852 / LMG 23827 / z3032).